We begin with the raw amino-acid sequence, 252 residues long: Type II secretion system protein N (252 aa).

The Cytoplasmic segment spans residues 1-4 (MKNR). The chain crosses the membrane as a helical span at residues 5 to 25 (LTIGLLLAAIYLFWLLLSAPA). Residues 26-252 (RLLALTLSDD…QGEWLSEEKK (227 aa)) are Periplasmic-facing.

The protein belongs to the GSP N family.

The protein resides in the cell inner membrane. Its function is as follows. Involved in a type II secretion system (T2SS, formerly general secretion pathway, GSP) for the export of proteins. Required for the translocation of pullulanase. The chain is Type II secretion system protein N (pulN) from Klebsiella pneumoniae.